The chain runs to 241 residues: DnaA regulatory inactivator Hda (241 aa).

Belongs to the DnaA family. HdA subfamily. The active form seems to be an ADP-bound monomer. Forms the RIDA complex (regulatory inactivation of DnaA) of ATP-DnaA, ADP-Hda and the DNA-loaded beta sliding clamp (dnaN).

Functionally, mediates the interaction of DNA replication initiator protein DnaA with DNA polymerase subunit beta sliding clamp (dnaN). Stimulates hydrolysis of ATP-DnaA to ADP-DnaA, rendering DnaA inactive for reinitiation, a process called regulatory inhibition of DnaA or RIDA. In Citrobacter koseri (strain ATCC BAA-895 / CDC 4225-83 / SGSC4696), this protein is DnaA regulatory inactivator Hda.